The sequence spans 215 residues: Oligoribonuclease (215 aa).

In terms of domain architecture, Exonuclease spans 5-170 (LVWIDCEMTG…ADIHESIREL (166 aa)). Y127 is a catalytic residue. The segment at 196–215 (LDEGKDAPGPSDSASAPPTG) is disordered. The segment covering 202 to 215 (APGPSDSASAPPTG) has biased composition (low complexity).

It belongs to the oligoribonuclease family.

It localises to the cytoplasm. In terms of biological role, 3'-to-5' exoribonuclease specific for small oligoribonucleotides. The sequence is that of Oligoribonuclease from Mycobacterium avium (strain 104).